We begin with the raw amino-acid sequence, 612 residues long: Probable methyltransferase PMT9 (612 aa).

Topologically, residues 1 to 14 are cytoplasmic; it reads MKHFRTERVRATPK. A helical; Signal-anchor for type II membrane protein transmembrane segment spans residues 15–35; it reads LFTYVLVGFIALLGLTCLYYG. The Lumenal portion of the chain corresponds to 36-612; that stretch reads SSFAPGSRKS…LWSLPAISVS (577 aa). Asn107, Asn383, and Asn562 each carry an N-linked (GlcNAc...) asparagine glycan.

The protein belongs to the methyltransferase superfamily.

The protein localises to the golgi apparatus membrane. This is Probable methyltransferase PMT9 from Arabidopsis thaliana (Mouse-ear cress).